A 286-amino-acid chain; its full sequence is 2-oxoglutarate synthase subunit KorB (286 aa).

In terms of assembly, heterotetramer of the KorA, KorB, KorC and KorD subunits.

It carries out the reaction 2 oxidized [2Fe-2S]-[ferredoxin] + 2-oxoglutarate + CoA = succinyl-CoA + 2 reduced [2Fe-2S]-[ferredoxin] + CO2 + H(+). The protein is 2-oxoglutarate synthase subunit KorB (korB) of Methanothermobacter thermautotrophicus (strain ATCC 29096 / DSM 1053 / JCM 10044 / NBRC 100330 / Delta H) (Methanobacterium thermoautotrophicum).